Here is a 93-residue protein sequence, read N- to C-terminus: MPRQSGFGWAWRVPLALAGSLAAATASGYLLTRGLPLDDPLERLYAGLFGALGVGLLLLVGGLLARGPGNFAWRLGGSLLVLGLALWLLAGRG.

Positions 1–25 (MPRQSGFGWAWRVPLALAGSLAAAT) are cleaved as a signal peptide. Transmembrane regions (helical) follow at residues 44–64 (LYAGLFGALGVGLLLLVGGLL) and 71–91 (FAWRLGGSLLVLGLALWLLAG).

The protein resides in the cell membrane. Functionally, may play some role in transport of Fe(3+)-pyochelin. The chain is Protein FptB (fptB) from Pseudomonas aeruginosa (strain ATCC 15692 / DSM 22644 / CIP 104116 / JCM 14847 / LMG 12228 / 1C / PRS 101 / PAO1).